The primary structure comprises 133 residues: Putative pre-16S rRNA nuclease (133 aa).

The protein belongs to the YqgF nuclease family.

The protein localises to the cytoplasm. Functionally, could be a nuclease involved in processing of the 5'-end of pre-16S rRNA. This chain is Putative pre-16S rRNA nuclease, found in Alcanivorax borkumensis (strain ATCC 700651 / DSM 11573 / NCIMB 13689 / SK2).